The sequence spans 226 residues: Protein TRI1 (226 aa).

Residues methionine 1–glycine 56 enclose the DEK-C domain. The tract at residues glutamine 83–serine 118 is disordered. The span at arginine 91–lysine 110 shows a compositional bias: basic residues. Serine 113 bears the Phosphoserine mark. The 77-residue stretch at isoleucine 119–asparagine 195 folds into the SWIB/MDM2 domain. Positions valine 200–asparagine 218 are enriched in basic and acidic residues. The segment at valine 200 to glycine 226 is disordered. Glycyl lysine isopeptide (Lys-Gly) (interchain with G-Cter in SUMO) cross-links involve residues lysine 201 and lysine 215. Serine 225 carries the phosphoserine modification.

The protein localises to the cytoplasm. It localises to the nucleus. Its subcellular location is the nucleolus. May be involved in transcription regulation. The chain is Protein TRI1 (TRI1) from Saccharomyces cerevisiae (strain ATCC 204508 / S288c) (Baker's yeast).